Consider the following 490-residue polypeptide: 2-succinylbenzoate--CoA ligase (490 aa).

The protein belongs to the ATP-dependent AMP-binding enzyme family. MenE subfamily.

The enzyme catalyses 2-succinylbenzoate + ATP + CoA = 2-succinylbenzoyl-CoA + AMP + diphosphate. Its pathway is quinol/quinone metabolism; 1,4-dihydroxy-2-naphthoate biosynthesis; 1,4-dihydroxy-2-naphthoate from chorismate: step 5/7. The protein operates within quinol/quinone metabolism; menaquinone biosynthesis. Functionally, converts 2-succinylbenzoate (OSB) to 2-succinylbenzoyl-CoA (OSB-CoA). This Geobacillus kaustophilus (strain HTA426) protein is 2-succinylbenzoate--CoA ligase.